The following is a 216-amino-acid chain: Large ribosomal subunit protein eL15 (216 aa).

Belongs to the eukaryotic ribosomal protein eL15 family.

In Metallosphaera sedula (strain ATCC 51363 / DSM 5348 / JCM 9185 / NBRC 15509 / TH2), this protein is Large ribosomal subunit protein eL15.